The chain runs to 122 residues: Large ribosomal subunit protein uL14c (122 aa).

This sequence belongs to the universal ribosomal protein uL14 family. As to quaternary structure, part of the 50S ribosomal subunit.

The protein resides in the plastid. The protein localises to the chloroplast. In terms of biological role, binds to 23S rRNA. This chain is Large ribosomal subunit protein uL14c, found in Buxus microphylla (Littleleaf boxwood).